We begin with the raw amino-acid sequence, 171 residues long: uncharacterized protein (171 aa).

Residues 5–25 form a helical membrane-spanning segment; that stretch reads FLLTIFALWVGGFGYYLYLIN.

Its subcellular location is the membrane. This is an uncharacterized protein from Rickettsia conorii (strain ATCC VR-613 / Malish 7).